Here is a 383-residue protein sequence, read N- to C-terminus: Acetylornithine deacetylase (383 aa).

H80 contributes to the Zn(2+) binding site. Residue D82 is part of the active site. A Zn(2+)-binding site is contributed by D112. E144 is an active-site residue. E145, E169, and H355 together coordinate Zn(2+).

It belongs to the peptidase M20A family. ArgE subfamily. As to quaternary structure, homodimer. The cofactor is Zn(2+). Co(2+) serves as cofactor. Requires glutathione as cofactor.

The protein localises to the cytoplasm. The enzyme catalyses N(2)-acetyl-L-ornithine + H2O = L-ornithine + acetate. The protein operates within amino-acid biosynthesis; L-arginine biosynthesis; L-ornithine from N(2)-acetyl-L-ornithine (linear): step 1/1. In terms of biological role, catalyzes the hydrolysis of the amide bond of N(2)-acetylated L-amino acids. Cleaves the acetyl group from N-acetyl-L-ornithine to form L-ornithine, an intermediate in L-arginine biosynthesis pathway, and a branchpoint in the synthesis of polyamines. The polypeptide is Acetylornithine deacetylase (Escherichia coli (strain SMS-3-5 / SECEC)).